The chain runs to 936 residues: Protein translocase subunit SecA (936 aa).

Residues Q90, 108–112 (GEGKT), and D499 each bind ATP.

Belongs to the SecA family. Monomer and homodimer. Part of the essential Sec protein translocation apparatus which comprises SecA, SecYEG and auxiliary proteins SecDF. Other proteins may also be involved.

It is found in the cell inner membrane. The protein localises to the cellular thylakoid membrane. Its subcellular location is the cytoplasm. It catalyses the reaction ATP + H2O + cellular proteinSide 1 = ADP + phosphate + cellular proteinSide 2.. Its function is as follows. Part of the Sec protein translocase complex. Interacts with the SecYEG preprotein conducting channel. Has a central role in coupling the hydrolysis of ATP to the transfer of proteins into and across the cell membrane, serving as an ATP-driven molecular motor driving the stepwise translocation of polypeptide chains across the membrane. Probably participates in protein translocation into and across both the cytoplasmic and thylakoid membranes in cyanobacterial cells. This chain is Protein translocase subunit SecA, found in Trichodesmium erythraeum (strain IMS101).